Consider the following 443-residue polypeptide: MSEMTPREIVSELNKHIIGQDNAKRSVAIALRNRWRRMQLDEELRHEVTPKNILMIGPTGVGKTEIARRLAKLANAPFIKVEATKFTEVGYVGKEVDSIIRDLTDAAVKMVRVQAIEKNRYRAEELAEERILDVLIPPAKNNWGQAEQQQEPSAARQTFRKKLREGQLDDKEIEINLAAAPMGVEIMAPPGMEEMTSQLQSMFQNLGGQKQKPRKLKIKDAMKLLVEEEAAKLVNPEELKQDAIDAVEQHGIVFIDEIDKICKRGETSGPDVSREGVQRDLLPLVEGCTVSTKHGMVKTDHILFIASGAFQVAKPSDLIPELQGRLPIRVELQALTTSDFERILTEPNASVTVQYKALMATEGVNIEFTDSGIKRIAEAAWQVNETTENIGARRLHTVLERLMEEISYNASDLHGQNITIDAEYVSKHLDALVADEDLSRFIL.

Residues isoleucine 18, 60 to 65, aspartate 256, glutamate 321, and arginine 393 contribute to the ATP site; that span reads GVGKTE.

This sequence belongs to the ClpX chaperone family. HslU subfamily. A double ring-shaped homohexamer of HslV is capped on each side by a ring-shaped HslU homohexamer. The assembly of the HslU/HslV complex is dependent on binding of ATP.

It localises to the cytoplasm. Functionally, ATPase subunit of a proteasome-like degradation complex; this subunit has chaperone activity. The binding of ATP and its subsequent hydrolysis by HslU are essential for unfolding of protein substrates subsequently hydrolyzed by HslV. HslU recognizes the N-terminal part of its protein substrates and unfolds these before they are guided to HslV for hydrolysis. The protein is ATP-dependent protease ATPase subunit HslU of Salmonella agona (strain SL483).